Reading from the N-terminus, the 278-residue chain is Coiled-coil domain-containing protein 121 (278 aa).

Coiled-coil stretches lie at residues 1-30 (MTDL…REKL) and 105-243 (QAMR…LIQA). The interval 253–278 (QCLNRQDVPKTTPSLPQGTKSRINPK) is disordered.

The chain is Coiled-coil domain-containing protein 121 (CCDC121) from Homo sapiens (Human).